Consider the following 386-residue polypeptide: TGF-beta-activated kinase 1 and MAP3K7-binding protein 1 (386 aa).

The region spanning 22–327 (HSCRYSKQKN…EEMTVIYVKL (306 aa)) is the PPM-type phosphatase domain.

As to quaternary structure, interacts with mom-4; the interaction enhances mom-4 kinase activity.

Functionally, involved in the Wnt signaling pathway by regulating mom-4 kinase activity. The chain is TGF-beta-activated kinase 1 and MAP3K7-binding protein 1 from Caenorhabditis elegans.